The primary structure comprises 311 residues: Olfactory receptor 5M8 (311 aa).

Residues 1–24 (MRRNCTLVTEFILLGLTSRRELQI) are Extracellular-facing. Residue N4 is glycosylated (N-linked (GlcNAc...) asparagine). Residues 25–45 (LLFTLFLAIYMVTVAGNLGMI) traverse the membrane as a helical segment. At 46-53 (VLIQANAW) the chain is on the cytoplasmic side. The helical transmembrane segment at 54–74 (LHMPMYFFLSHLSFVDLCFSS) threads the bilayer. Residues 75-98 (NVTPKMLEIFLSEKKSISYPACLV) lie on the Extracellular side of the membrane. C96 and C188 form a disulfide bridge. Residues 99–119 (QCYLFIALVHVEIYILAVMAF) form a helical membrane-spanning segment. The Cytoplasmic segment spans residues 120–138 (DRYMAICNPLLYGSRMSKS). Residues 139–159 (VCSFLITVPYVYGALTGLMET) traverse the membrane as a helical segment. The Extracellular segment spans residues 160–195 (MWTYNLAFCGPNEINHFYCADPPLIKLACSDTYNKE). The helical transmembrane segment at 196-216 (LSMFIVAGWNLSFSLFIICIS) threads the bilayer. The Cytoplasmic portion of the chain corresponds to 217–236 (YLYIFPAILKIRSTEGRQKA). A helical transmembrane segment spans residues 237–257 (FSTCGSHLTAVTIFYATLFFM). Residues 258–270 (YLRPPSKESVEQG) lie on the Extracellular side of the membrane. The helical transmembrane segment at 271–291 (KMVAVFYTTVIPMLNLIIYSL) threads the bilayer. Over 292–311 (RNKNVKEALIKELSMKIYFS) the chain is Cytoplasmic.

It belongs to the G-protein coupled receptor 1 family.

The protein resides in the cell membrane. Its function is as follows. Odorant receptor. In Homo sapiens (Human), this protein is Olfactory receptor 5M8 (OR5M8).